A 396-amino-acid chain; its full sequence is KiSS-1 receptor (396 aa).

Residues 1–46 lie on the Extracellular side of the membrane; sequence MAAEATLGPNVSWWAPSNASGCPGCGVNASDGPGSAPRPLDAWLVP. 3 N-linked (GlcNAc...) asparagine glycosylation sites follow: asparagine 10, asparagine 18, and asparagine 28. Residues 47–67 traverse the membrane as a helical segment; it reads LFFAALMLLGLVGNSLVIFVI. At 68-90 the chain is on the cytoplasmic side; sequence CRHKHMQTVTNFYIANLAATDVT. The chain crosses the membrane as a helical span at residues 91–111; sequence FLLCCVPFTALLYPLPTWVLG. The Extracellular portion of the chain corresponds to 112–120; that stretch reads DFMCKFVNY. Cysteine 115 and cysteine 191 are oxidised to a cystine. A helical transmembrane segment spans residues 121–138; that stretch reads IQQVSVQATCATLTAMSV. Residues 139-159 lie on the Cytoplasmic side of the membrane; the sequence is DRWYVTVFPLRALHRRTPRLA. Residues 160-180 traverse the membrane as a helical segment; sequence LTVSLSIWVGSAAVSAPVLAL. Over 181 to 202 the chain is Extracellular; it reads HRLSPGPHTYCSEAFPSRALER. A helical transmembrane segment spans residues 203–223; the sequence is AFALYNLLALYLLPLLATCAC. The Cytoplasmic portion of the chain corresponds to 224–264; the sequence is YGAMLRHLGRAAVRPAPTDGALQGQLLAQRAGAVRTKVSRL. A helical transmembrane segment spans residues 265–285; the sequence is VAAVVLLFAACWGPIQLFLVL. Topologically, residues 286–305 are extracellular; that stretch reads QALGPSGAWHPRSYAAYALK. A helical transmembrane segment spans residues 306 to 326; the sequence is IWAHCMSYSNSALNPLLYAFL. Over 327 to 396 the chain is Cytoplasmic; sequence GSHFRQAFCR…SVQDEHTAPL (70 aa). The segment at 346–396 is disordered; that stretch reads RRPHASAHSDRAAPHSVPHSRAAHPVRVRTPEPGNPVRRSPSVQDEHTAPL.

This sequence belongs to the G-protein coupled receptor 1 family. In terms of tissue distribution, highest expression levels in the cerebrum and cecum. Moderate expression in the ovary, colon and placenta. Low levels in the uterus, small intestine, and thymus. Expressed only moderately in the placenta. No expression in kidney tissues. Has a complex and abundant central nervous system expression pattern. Expressed in brain regions such as pons, midbrain, thalamus, hypothalamus, hippocampus, amygdala, cortex, frontal cortex, and striatum. No expression in the cerebellum. Persistent expression is detected in hypothalamus throughout postnatal development, with maximum expression levels at puberty in both male and female. Hypothalamic expression changed throughout the estrus cycle and is significantly increased after gonadectomy, a rise that is prevented by sex steroid replacement both in males and females.

It localises to the cell membrane. Its function is as follows. Receptor for metastin, a C-terminally amidated peptide of KiSS1. KiSS1 is a metastasis suppressor protein. Activation of the receptor inhibits cell proliferation and cell migration, key characteristics of tumor metastasis. The receptor is essential for normal gonadotropin-released hormone physiology and for puberty. The hypothalamic KiSS1/KISS1R system is a pivotal factor in central regulation of the gonadotropic axis at puberty and in adulthood. Analysis of the transduction pathways activated by the receptor identifies coupling to phospholipase C and intracellular calcium release through pertussis toxin-insensitive G(q) proteins. The polypeptide is KiSS-1 receptor (Kiss1r) (Rattus norvegicus (Rat)).